A 556-amino-acid polypeptide reads, in one-letter code: 2-succinyl-5-enolpyruvyl-6-hydroxy-3-cyclohexene-1-carboxylate synthase (556 aa).

The protein belongs to the TPP enzyme family. MenD subfamily. Homodimer. Mg(2+) serves as cofactor. Mn(2+) is required as a cofactor. The cofactor is thiamine diphosphate.

It catalyses the reaction isochorismate + 2-oxoglutarate + H(+) = 5-enolpyruvoyl-6-hydroxy-2-succinyl-cyclohex-3-ene-1-carboxylate + CO2. The protein operates within quinol/quinone metabolism; 1,4-dihydroxy-2-naphthoate biosynthesis; 1,4-dihydroxy-2-naphthoate from chorismate: step 2/7. It participates in quinol/quinone metabolism; menaquinone biosynthesis. Its function is as follows. Catalyzes the thiamine diphosphate-dependent decarboxylation of 2-oxoglutarate and the subsequent addition of the resulting succinic semialdehyde-thiamine pyrophosphate anion to isochorismate to yield 2-succinyl-5-enolpyruvyl-6-hydroxy-3-cyclohexene-1-carboxylate (SEPHCHC). This is 2-succinyl-5-enolpyruvyl-6-hydroxy-3-cyclohexene-1-carboxylate synthase from Escherichia coli (strain ATCC 8739 / DSM 1576 / NBRC 3972 / NCIMB 8545 / WDCM 00012 / Crooks).